The primary structure comprises 394 residues: 4-hydroxyphenylpyruvate dioxygenase (394 aa).

2 VOC domains span residues 18-149 (SFHH…LLEY) and 181-339 (FIDH…IFTK). Residues histidine 184, histidine 267, and glutamate 350 each coordinate Fe cation.

It belongs to the 4HPPD family. Homodimer. Fe cation is required as a cofactor.

The protein localises to the cytoplasm. Its subcellular location is the endoplasmic reticulum membrane. It is found in the golgi apparatus membrane. It carries out the reaction 3-(4-hydroxyphenyl)pyruvate + O2 = homogentisate + CO2. It functions in the pathway amino-acid degradation; L-phenylalanine degradation; acetoacetate and fumarate from L-phenylalanine: step 3/6. In terms of biological role, catalyzes the conversion of 4-hydroxyphenylpyruvic acid to homogentisic acid, one of the steps in tyrosine catabolism. The chain is 4-hydroxyphenylpyruvate dioxygenase (hpd) from Xenopus tropicalis (Western clawed frog).